The following is a 223-amino-acid chain: MGQKVNPNGFRVGVIRDWQAKWYADKDFSKFLAEDIKIREFIAKQLTDASVSTVEIERAANRVNISIHTAKPGMVIGKGGSEVEKLRNQLNQLTGKRVHINIVEIKKPDLEAKLVGENIAAQLEGRVAFRRAMKQAMQRSMRSGAKGIKTQVAGRLNGADMSRVERYSEGKVPLHTLRADVDYAWVEARTTYGQLGVKTWIYRGEILPEVKDAKKNSKEQGGK.

The KH type-2 domain occupies 38-106; sequence IREFIAKQLT…RVHINIVEIK (69 aa).

This sequence belongs to the universal ribosomal protein uS3 family. As to quaternary structure, part of the 30S ribosomal subunit. Forms a tight complex with proteins S10 and S14.

In terms of biological role, binds the lower part of the 30S subunit head. Binds mRNA in the 70S ribosome, positioning it for translation. In Pediococcus pentosaceus (strain ATCC 25745 / CCUG 21536 / LMG 10740 / 183-1w), this protein is Small ribosomal subunit protein uS3.